A 220-amino-acid polypeptide reads, in one-letter code: Large ribosomal subunit protein uL1 (220 aa).

Belongs to the universal ribosomal protein uL1 family. In terms of assembly, part of the 50S ribosomal subunit.

Functionally, binds directly to 23S rRNA. The L1 stalk is quite mobile in the ribosome, and is involved in E site tRNA release. Its function is as follows. Protein L1 is also a translational repressor protein, it controls the translation of the L11 operon by binding to its mRNA. The chain is Large ribosomal subunit protein uL1 from Ehrlichia chaffeensis (strain ATCC CRL-10679 / Arkansas).